Consider the following 78-residue polypeptide: Ferredoxin (78 aa).

2 consecutive 4Fe-4S ferredoxin-type domains span residues 2-29 (FVIT…HEGP) and 30-59 (DQYY…QEEF). The [3Fe-4S] cluster site is built by cysteine 8 and cysteine 16. Cysteine 20, cysteine 39, cysteine 42, and cysteine 45 together coordinate [4Fe-4S] cluster. Cysteine 49 is a [3Fe-4S] cluster binding site.

Requires [3Fe-4S] cluster as cofactor. [4Fe-4S] cluster serves as cofactor.

Ferredoxins are iron-sulfur proteins that transfer electrons in a wide variety of metabolic reactions. In Alicyclobacillus acidocaldarius subsp. acidocaldarius (Bacillus acidocaldarius), this protein is Ferredoxin.